Here is a 224-residue protein sequence, read N- to C-terminus: MGQKVHPIGFRLGVIRSWDSKWYEEKNYAKWLHEDIKLREFVKEKLGQAGISRIEIERAANKVKINVHTARPGIVIGKRGAGIETIKKDLQGLTDNEVYLNVVEVRKAETDAQLVAENIATQLERRIAFRRAMKKSVQTALKFGAKGIRVACSGRLGGSEMARYEWYREGRVPLHTLRADIDYGFAEAKTTYGKIGCKVWIMRGEVLPQSAAARAPRTTGGARP.

The KH type-2 domain maps to 38–106; it reads LREFVKEKLG…EVYLNVVEVR (69 aa).

It belongs to the universal ribosomal protein uS3 family. As to quaternary structure, part of the 30S ribosomal subunit. Forms a tight complex with proteins S10 and S14.

Binds the lower part of the 30S subunit head. Binds mRNA in the 70S ribosome, positioning it for translation. This chain is Small ribosomal subunit protein uS3, found in Anaeromyxobacter dehalogenans (strain 2CP-1 / ATCC BAA-258).